A 322-amino-acid polypeptide reads, in one-letter code: Beta-ketoacyl-[acyl-carrier-protein] synthase III (322 aa).

Catalysis depends on residues C112 and H249. The interval 250 to 254 (QANQR) is ACP-binding. The active site involves N279.

It belongs to the thiolase-like superfamily. FabH family. Homodimer.

It localises to the cytoplasm. The enzyme catalyses malonyl-[ACP] + acetyl-CoA + H(+) = 3-oxobutanoyl-[ACP] + CO2 + CoA. Its pathway is lipid metabolism; fatty acid biosynthesis. In terms of biological role, catalyzes the condensation reaction of fatty acid synthesis by the addition to an acyl acceptor of two carbons from malonyl-ACP. Catalyzes the first condensation reaction which initiates fatty acid synthesis and may therefore play a role in governing the total rate of fatty acid production. Possesses both acetoacetyl-ACP synthase and acetyl transacylase activities. Its substrate specificity determines the biosynthesis of branched-chain and/or straight-chain of fatty acids. The chain is Beta-ketoacyl-[acyl-carrier-protein] synthase III from Caulobacter vibrioides (strain ATCC 19089 / CIP 103742 / CB 15) (Caulobacter crescentus).